The chain runs to 151 residues: Putative pre-16S rRNA nuclease (151 aa).

This sequence belongs to the YqgF nuclease family.

Its subcellular location is the cytoplasm. In terms of biological role, could be a nuclease involved in processing of the 5'-end of pre-16S rRNA. This Myxococcus xanthus (strain DK1622) protein is Putative pre-16S rRNA nuclease.